Consider the following 255-residue polypeptide: 3-deoxy-manno-octulosonate cytidylyltransferase (255 aa).

The protein belongs to the KdsB family.

The protein localises to the cytoplasm. It catalyses the reaction 3-deoxy-alpha-D-manno-oct-2-ulosonate + CTP = CMP-3-deoxy-beta-D-manno-octulosonate + diphosphate. It functions in the pathway nucleotide-sugar biosynthesis; CMP-3-deoxy-D-manno-octulosonate biosynthesis; CMP-3-deoxy-D-manno-octulosonate from 3-deoxy-D-manno-octulosonate and CTP: step 1/1. Its pathway is bacterial outer membrane biogenesis; lipopolysaccharide biosynthesis. Activates KDO (a required 8-carbon sugar) for incorporation into bacterial lipopolysaccharide in Gram-negative bacteria. The polypeptide is 3-deoxy-manno-octulosonate cytidylyltransferase (Glaesserella parasuis serovar 5 (strain SH0165) (Haemophilus parasuis)).